The following is a 287-amino-acid chain: Elongation factor Ts (287 aa).

Residues 80–83 (TDFL) form an involved in Mg(2+) ion dislocation from EF-Tu region.

Belongs to the EF-Ts family.

It localises to the cytoplasm. Functionally, associates with the EF-Tu.GDP complex and induces the exchange of GDP to GTP. It remains bound to the aminoacyl-tRNA.EF-Tu.GTP complex up to the GTP hydrolysis stage on the ribosome. In Pseudomonas fluorescens (strain SBW25), this protein is Elongation factor Ts.